Here is a 102-residue protein sequence, read N- to C-terminus: Glutaredoxin 1 (102 aa).

The region spanning 1–96 is the Glutaredoxin domain; that stretch reads MNKAILHTII…KLLEGQPKKK (96 aa). The cysteines at positions 17 and 20 are disulfide-linked.

The protein belongs to the glutaredoxin family. Monomer.

The protein localises to the cytoplasm. Has a glutathione-disulfide oxidoreductase activity in the presence of NADPH and glutathione reductase. Reduces low molecular weight disulfides and proteins. The sequence is that of Glutaredoxin 1 (grxC1) from Rickettsia felis (strain ATCC VR-1525 / URRWXCal2) (Rickettsia azadi).